Consider the following 154-residue polypeptide: MSELCPCGSILNYHECCGPYILGTQVAAKPAILMRSRYCAYVEKNVDYLIATWHPDCHAQEWRESIIQGFTKTVWHGLTVIAETPGRHPDEAFVEFIARFTDADNAQITAMHERSRFLRIKEHWYYIDGIRPSLGRNDTCLCGSGKKHKKCCGR.

This sequence belongs to the UPF0225 family.

The protein is UPF0225 protein YPDSF_0962 of Yersinia pestis (strain Pestoides F).